We begin with the raw amino-acid sequence, 451 residues long: uncharacterized protein (451 aa).

Positions 1-451 are disordered; that stretch reads MSETENKTTT…KKEAAKNKSK (451 aa). Residues 9–22 are compositionally biased toward low complexity; sequence TTETPTTTDSTVTT. The span at 44-54 shows a compositional bias: polar residues; it reads VKNQLSNTRTR. Over residues 73 to 99 the composition is skewed to basic and acidic residues; that stretch reads KLIDTKERKEKKEKKEKEPKEPKEPKE. Residues 114 to 147 show a composition bias toward acidic residues; sequence GDEEEDEEKEEDEEQKEEQSQEEDSEESEEEQNS. A compositionally biased stretch (basic residues) spans 152–162; that stretch reads KKKKKQAKKVA. Basic and acidic residues-rich tracts occupy residues 163–192, 199–210, and 217–230; these read KKET…EKEA, STEKKEKEEKPK, and KKDQ…KDGD. Residues 232–244 show a composition bias toward low complexity; it reads STTTTATATTTTD. Composition is skewed to basic and acidic residues over residues 284-303 and 311-340; these read TEEK…ETKK and AAAE…DDKP. Residues 341-355 are compositionally biased toward low complexity; the sequence is AATTTTTTAAAATTT. Residues 356-383 show a composition bias toward basic and acidic residues; that stretch reads EEPKEKITKPAADKKKAPANKKAEKDQS. Over residues 393–425 the composition is skewed to low complexity; the sequence is TTTATTTTTNKDATAPTTTTNKDATAPTTTTTK. Residues 441-451 are compositionally biased toward basic and acidic residues; that stretch reads PKKEAAKNKSK.

This is an uncharacterized protein from Dictyostelium discoideum (Social amoeba).